The chain runs to 259 residues: Global transcriptional regulator CodY (259 aa).

Positions 1–155 (MNLLAKTRKL…GATVVGMEIL (155 aa)) are GAF domain. Positions 203–222 (ASKIADRVGITRSVIVNALR) form a DNA-binding region, H-T-H motif.

This sequence belongs to the CodY family.

The protein resides in the cytoplasm. In terms of biological role, DNA-binding global transcriptional regulator which is involved in the adaptive response to starvation and acts by directly or indirectly controlling the expression of numerous genes in response to nutrient availability. During rapid exponential growth, CodY is highly active and represses genes whose products allow adaptation to nutrient depletion. The polypeptide is Global transcriptional regulator CodY (Exiguobacterium sibiricum (strain DSM 17290 / CCUG 55495 / CIP 109462 / JCM 13490 / 255-15)).